The primary structure comprises 1124 residues: Translation initiation factor IF-2 (1124 aa).

Positions 32–41 (IAAKSHSSSI) are enriched in low complexity. Disordered stretches follow at residues 32–451 (IAAK…QKVH) and 480–523 (LARP…RAAR). Residues 94–104 (ATSSSEISQVK) are compositionally biased toward polar residues. The segment covering 134 to 173 (VNPTTTPTSSPPKTAARPVNAPISRPATPSRPSAPTPRSA) has biased composition (low complexity). Polar residues predominate over residues 192-203 (GQTSTSSKATTV). Low complexity predominate over residues 214–227 (SRPQSPAAPGRSAP). Composition is skewed to basic and acidic residues over residues 235–246 (SDRKAPKPELVG) and 261–272 (PEPEGQRPDKKR). Low complexity-rich tracts occupy residues 274-283 (GISPRPIGGP) and 411-422 (RPAQAPAAGAPR). Positions 425–439 (GRPDWDDSAKLEALR) are enriched in basic and acidic residues. Composition is skewed to basic residues over residues 484-493 (AKPKSQKKPA) and 500-514 (LRKRKKETTRQRQRR). The 173-residue stretch at 615 to 787 (RRPPVVTVMG…ILLVTEVEDL (173 aa)) folds into the tr-type G domain. Residues 624 to 631 (GHVDHGKT) are G1. 624–631 (GHVDHGKT) contributes to the GTP binding site. Residues 649 to 653 (GITQH) form a G2 region. Positions 674 to 677 (DTPG) are G3. GTP is bound by residues 674 to 678 (DTPGH) and 728 to 731 (NKTD). Residues 728–731 (NKTD) are G4. Positions 764 to 766 (SAI) are G5.

Belongs to the TRAFAC class translation factor GTPase superfamily. Classic translation factor GTPase family. IF-2 subfamily.

The protein localises to the cytoplasm. Its function is as follows. One of the essential components for the initiation of protein synthesis. Protects formylmethionyl-tRNA from spontaneous hydrolysis and promotes its binding to the 30S ribosomal subunits. Also involved in the hydrolysis of GTP during the formation of the 70S ribosomal complex. The protein is Translation initiation factor IF-2 of Prochlorococcus marinus (strain MIT 9303).